Here is a 780-residue protein sequence, read N- to C-terminus: Cullin-5 (780 aa).

Serine 34 carries the post-translational modification Phosphoserine. Threonine 210 is modified (phosphothreonine). A Cullin neddylation domain is found at 711 to 772; that stretch reads RILRTQEAII…HRYIRRDEAD (62 aa). Lysine 724 participates in a covalent cross-link: Glycyl lysine isopeptide (Lys-Gly) (interchain with G-Cter in NEDD8).

It belongs to the cullin family. As to quaternary structure, component of multiple cullin-5-RING E3 ubiquitin-protein ligase complexes (ECS complexes, also named CRL5 complexes) formed of CUL5, Elongin BC (ELOB and ELOC), RNF7/RBX2 and a variable SOCS box domain-containing protein as substrate-specific recognition component. CUL5-containing ECS complexes specifically contain RNF7/RBX2, and not RBX1, as catalytic subunit. Component of the ECS(ASB2) complex with the substrate recognition component ASB2. Component of the ECS(ASB6) complex with the substrate recognition component ASB6. Component of the ECS(ASB7) complex with the substrate recognition component ASB7. Component of the ECS(ASB9) complex with the substrate recognition component ASB9. Component of the ECS(ASB11) complex with the substrate recognition component ASB11. Component of the ECS(ASB12) complex with the substrate recognition component ASB12. Component of the ECS(LRRC41) complex with the substrate recognition component LRRC41. Component of the ECS(SOCS1) complex with the substrate recognition component SOCS1. Component of the ECS(SOCS2) complex with the substrate recognition component SOCS2. Component of the ECS(WSB1) complex with the substrate recognition subunit WSB1. Component of the ECS(SOCS3) complex with the substrate recognition component SOCS3. Component of the ECS(SOCS7) complex with the substrate recognition component SOCS7. Component of the ECS(SPSB1) complex with the substrate recognition component SPSB1. Component of the ECS(SPSB3) complex with the substrate recognition component SPSB3. Component of the ECS(SPSB2) complex with the substrate recognition component SPSB2. Component of the ECS(SPSB4) complex with the substrate recognition component SPSB4. Component of the ECS(RAB40) complex with the substrate recognition subunit RAB40A, RAB40B or RAB40C. Component of the ECS(KLHDC1) complex with the substrate recognition component KLHDC1. Component of the ECS(PCMTD1) complex with the substrate recognition subunit PCMTD1. May also form complexes containing RBX1 and ELOA or VHL; additional evidence is however required to confirm this result in vivo. Interacts (when neddylated) with ARIH2; leading to activate the E3 ligase activity of ARIH2. Interacts with ERCC6; the interaction is induced by DNA damaging agents or inhibitors of RNA polymerase II elongation. Interacts with ELOA (via the BC-box). Interacts (unneddylated form) with DCUN1D1, DCUN1D2, DCUN1D3, DCUN1D4 and DCUN1D5; these interactions promote the cullin neddylation. In terms of processing, neddylated; which enhances the ubiquitination activity of ECS complexes and prevents binding of the inhibitor CAND1. Deneddylated via its interaction with the COP9 signalosome (CSN).

It is found in the nucleus. The protein operates within protein modification; protein ubiquitination. Its function is as follows. Core component of multiple cullin-5-RING E3 ubiquitin-protein ligase complexes (ECS complexes, also named CRL5 complexes), which mediate the ubiquitination and subsequent proteasomal degradation of target proteins. Acts a scaffold protein that contributes to catalysis through positioning of the substrate and the ubiquitin-conjugating enzyme. The functional specificity of the E3 ubiquitin-protein ligase complex depends on the variable SOCS box-containing substrate recognition component. Acts as a key regulator of neuron positioning during cortex development: component of various SOCS-containing ECS complexes, such as the ECS(SOCS7) complex, that regulate reelin signaling by mediating ubiquitination and degradation of DAB1. ECS(SOCS1) seems to direct ubiquitination of JAK2. The ECS(SOCS2) complex mediates the ubiquitination and subsequent proteasomal degradation of phosphorylated EPOR and GHR. The ECS(SPSB3) complex catalyzes ubiquitination of nuclear CGAS. ECS(KLHDC1) complex is part of the DesCEND (destruction via C-end degrons) pathway and mediates ubiquitination and degradation of truncated SELENOS selenoprotein produced by failed UGA/Sec decoding, which ends with a glycine. The ECS(ASB9) complex mediates ubiquitination and degradation of CKB. As part of some ECS complex, promotes 'Lys-11'-linked ubiquitination and degradation of BTRC. As part of a multisubunit ECS complex, polyubiquitinates monoubiquitinated POLR2A. As part of the ECS(RAB40C) complex, mediates ANKRD28 ubiquitination and degradation, thereby regulating protein phosphatase 6 (PP6) complex activity and focal adhesion assembly during cell migration. As part of the ECS(RAB40A) complex, mediates RHOU 'Lys-48'-linked ubiquitination and degradation, thus inhibiting focal adhesion disassembly during cell migration. As part of the ECS(RAB40B) complex, mediates LIMA1/EPLIN and RAP2 ubiquitination, thereby regulating actin cytoskeleton dynamics and stress fiber formation during cell migration. May form a cell surface vasopressin receptor. This is Cullin-5 from Mus musculus (Mouse).